The primary structure comprises 307 residues: UDP-3-O-acyl-N-acetylglucosamine deacetylase (307 aa).

Residues histidine 80, histidine 239, and aspartate 243 each contribute to the Zn(2+) site. The active-site Proton donor is histidine 266.

This sequence belongs to the LpxC family. Zn(2+) serves as cofactor.

It carries out the reaction a UDP-3-O-[(3R)-3-hydroxyacyl]-N-acetyl-alpha-D-glucosamine + H2O = a UDP-3-O-[(3R)-3-hydroxyacyl]-alpha-D-glucosamine + acetate. The protein operates within glycolipid biosynthesis; lipid IV(A) biosynthesis; lipid IV(A) from (3R)-3-hydroxytetradecanoyl-[acyl-carrier-protein] and UDP-N-acetyl-alpha-D-glucosamine: step 2/6. In terms of biological role, catalyzes the hydrolysis of UDP-3-O-myristoyl-N-acetylglucosamine to form UDP-3-O-myristoylglucosamine and acetate, the committed step in lipid A biosynthesis. The sequence is that of UDP-3-O-acyl-N-acetylglucosamine deacetylase from Neisseria meningitidis serogroup C / serotype 2a (strain ATCC 700532 / DSM 15464 / FAM18).